The chain runs to 184 residues: Myeloproliferative leukemia protein (184 aa).

A WSXWS motif motif is present at residues 26–30; sequence WSAWS. Residues 44–64 form a helical membrane-spanning segment; it reads ITLVTALLLVLSLSALLGLLL. Residues 80–88 carry the Box 1 motif motif; it reads LWPSLPDLH.

The protein belongs to the type I cytokine receptor family. Type 1 subfamily.

The protein localises to the membrane. Truncated form of the receptor for thrombopoietin. The sequence is that of Myeloproliferative leukemia protein (V-MPL) from Mus musculus (Mouse).